Here is a 144-residue protein sequence, read N- to C-terminus: Oleosin H2 (144 aa).

The residue at position 2 (Ala2) is an N-acetylalanine. The next 3 helical transmembrane spans lie at 28–48 (VLAV…AGLI), 53–73 (IIGL…LVPA), and 75–95 (LTIA…ITAL). A Proline-knot motif is present at residues 61 to 72 (PLFVIFSPILVP). Positions 124–144 (QETVGQKTREAGQRSQDVIRP) are disordered.

The protein belongs to the oleosin family. As to expression, expressed in seeds (at protein level).

It is found in the lipid droplet. It localises to the membrane. May have a structural role to stabilize the lipid body during desiccation of the seed by preventing coalescence of the oil. Probably interacts with both lipid and phospholipid moieties of lipid bodies. May also provide recognition signals for specific lipase anchorage in lipolysis during seedling growth. In Sesamum indicum (Oriental sesame), this protein is Oleosin H2.